The sequence spans 217 residues: GTP cyclohydrolase 1 (217 aa).

Zn(2+) is bound by residues C109, H112, and C180.

This sequence belongs to the GTP cyclohydrolase I family. As to quaternary structure, toroid-shaped homodecamer, composed of two pentamers of five dimers.

It carries out the reaction GTP + H2O = 7,8-dihydroneopterin 3'-triphosphate + formate + H(+). It functions in the pathway cofactor biosynthesis; 7,8-dihydroneopterin triphosphate biosynthesis; 7,8-dihydroneopterin triphosphate from GTP: step 1/1. The protein is GTP cyclohydrolase 1 of Vibrio vulnificus (strain CMCP6).